Reading from the N-terminus, the 123-residue chain is Galanin peptides (123 aa).

A signal peptide spans 1–19 (MPRGSVLLLASLLLAAALS). Residues 20 to 30 (ATLGLGSPVKE) constitute a propeptide that is removed on maturation. Over residues 53–66 (SFQDKHGLAGKREL) the composition is skewed to basic and acidic residues. The tract at residues 53–79 (SFQDKHGLAGKRELEPEDEARPGSFDR) is disordered. Alanine 61 bears the Alanine amide mark. Serine 116 bears the Phosphoserine mark.

It belongs to the galanin family.

Its subcellular location is the secreted. Functionally, endocrine hormone of the central and peripheral nervous systems that binds and activates the G protein-coupled receptors GALR1, GALR2, and GALR3. This small neuropeptide may regulate diverse physiologic functions including contraction of smooth muscle of the gastrointestinal and genitourinary tract, growth hormone and insulin release and adrenal secretion. This is Galanin peptides (GAL) from Bos taurus (Bovine).